Consider the following 148-residue polypeptide: Photosystem II extrinsic protein U, chloroplastic (148 aa).

Residues 1 to 32 constitute a chloroplast transit peptide; it reads MKLAVFAVLISTVAAFVAPNGVQRAATTELNA. A thylakoid-targeting transit peptide spans 33–54; that stretch reads ERREFLSAAAVAAGLAFPLTAN.

The protein belongs to the PsbU family. In terms of assembly, PSII is composed of 1 copy each of membrane proteins PsbA, PsbB, PsbC, PsbD, PsbE, PsbF, PsbH, PsbI, PsbJ, PsbK, PsbL, PsbM, PsbT, PsbX, PsbY, PsbZ, Psb30/Ycf12, at least 3 peripheral proteins of the oxygen-evolving complex and a large number of cofactors. It forms dimeric complexes. The oxygen-evolving complex may be composed of PsbO, PsbQ', PsbV and PsbU.

The protein resides in the plastid. It localises to the chloroplast thylakoid membrane. In terms of biological role, one of the extrinsic, lumenal subunits of photosystem II (PSII), which stabilize and protect the oxygen-evolving complex. PSII is a light-driven water plastoquinone oxidoreductase, using light energy to abstract electrons from H(2)O, generating a proton gradient subsequently used for ATP formation. Stabilizes the structure of photosystem II oxygen-evolving complex (OEC), the ion environment of oxygen evolution and protects the OEC against heat-induced inactivation. The protein is Photosystem II extrinsic protein U, chloroplastic of Phaeodactylum tricornutum (Diatom).